The primary structure comprises 65 residues: Metallothionein-like protein 3B (65 aa).

This sequence belongs to the metallothionein superfamily. Type 15 family.

Its function is as follows. Metallothioneins have a high content of cysteine residues that bind various heavy metals. The polypeptide is Metallothionein-like protein 3B (MT3B) (Oryza sativa subsp. indica (Rice)).